Consider the following 331-residue polypeptide: 6-phosphogluconolactonase (331 aa).

N6-acetyllysine is present on K287.

It belongs to the cycloisomerase 2 family.

The catalysed reaction is 6-phospho-D-glucono-1,5-lactone + H2O = 6-phospho-D-gluconate + H(+). The protein operates within carbohydrate degradation; pentose phosphate pathway; D-ribulose 5-phosphate from D-glucose 6-phosphate (oxidative stage): step 2/3. Functionally, catalyzes the hydrolysis of 6-phosphogluconolactone to 6-phosphogluconate. The protein is 6-phosphogluconolactonase of Escherichia coli O8 (strain IAI1).